We begin with the raw amino-acid sequence, 1065 residues long: Ceruloplasmin (1065 aa).

The N-terminal stretch at 1–19 (MKILILGIFLFLCSTPAWA) is a signal peptide. Plastocyanin-like domains lie at 20-200 (KEKH…LIIC) and 209-357 (KEKH…VQEC). Na(+)-binding residues include tyrosine 55, glycine 64, and tyrosine 67. The Cu(2+) site is built by histidine 120 and histidine 122. Residue histidine 120 participates in O2 binding. Lysine 128 contacts Ca(2+). A glycan (N-linked (GlcNAc...) (complex) asparagine) is linked at asparagine 138. Ca(2+)-binding residues include glutamine 143, aspartate 146, and aspartate 147. A disulfide bond links cysteine 174 and cysteine 200. Residues histidine 180 and histidine 182 each contribute to the Cu(2+) site. Residue histidine 180 coordinates O2. Serine 256 provides a ligand contact to Na(+). Cysteines 276 and 357 form a disulfide. Cu(2+)-binding residues include histidine 295, cysteine 338, and histidine 343. N-linked (GlcNAc...) (complex) asparagine glycosylation is found at asparagine 358 and asparagine 397. Plastocyanin-like domains lie at 370 to 560 (HVRH…MKIC) and 570 to 718 (RQKD…VNQC). The Na(+) site is built by phenylalanine 408, glycine 417, and tyrosine 420. Cysteine 534 and cysteine 560 are disulfide-bonded. Asparagine 588 is a glycosylation site (N-linked (GlcNAc...) asparagine). Serine 617 is a Na(+) binding site. Cysteines 637 and 718 form a disulfide. Positions 656, 699, 704, and 709 each coordinate Cu(2+). Cysteine 699 serves as the catalytic Nucleophile; for glutathione peroxidase activity. Position 722 is a phosphoserine; by FAM20C (serine 722). 2 Plastocyanin-like domains span residues 730-900 (GERT…LIVC) and 908-1061 (FNPR…QNED). Residue asparagine 762 is glycosylated (N-linked (GlcNAc...) (complex) asparagine). Phenylalanine 767, glycine 776, and tyrosine 779 together coordinate Na(+). Cysteine 874 and cysteine 900 are oxidised to a cystine. A glycan (N-linked (GlcNAc...) asparagine) is linked at asparagine 926. A Na(+)-binding site is contributed by serine 955. Cu(2+)-binding residues include histidine 994, histidine 997, histidine 999, histidine 1039, cysteine 1040, histidine 1041, histidine 1045, and methionine 1050. 2 residues coordinate O2: histidine 997 and histidine 999. Histidine 1041 is a binding site for O2.

The protein belongs to the multicopper oxidase family. In terms of assembly, found in a complex with MPO and LTF; interacts directly with MPO and LTF, which allows Fe(3+) incorporation into LTF, activation of CP ferroxidase activity and protection of CP antioxidant properties by MPO. Cu(2+) serves as cofactor. As to expression, expressed by the liver and secreted in plasma.

The protein resides in the secreted. The enzyme catalyses 4 Fe(2+) + O2 + 4 H(+) = 4 Fe(3+) + 2 H2O. It carries out the reaction 4 Cu(+) + O2 + 4 H(+) = 4 Cu(2+) + 2 H2O. It catalyses the reaction a hydroperoxide + 2 glutathione = an alcohol + glutathione disulfide + H2O. The catalysed reaction is 4 nitric oxide + O2 + 2 H2O = 4 nitrite + 4 H(+). The enzyme catalyses 2 glutathione + H2O2 = glutathione disulfide + 2 H2O. In terms of biological role, multifunctional blue, copper-binding (6-7 atoms per molecule) glycoprotein. It has ferroxidase activity oxidizing Fe(2+) to Fe(3+) without releasing radical oxygen species. It is involved in iron transport across the cell membrane. Copper ions provide a large number of enzymatic activites. Oxidizes highly toxic ferrous ions to the ferric state for further incorporation onto apo-transferrins, catalyzes Cu(+) oxidation and promotes the oxidation of biogenic amines such as norepinephrin and serotonin. Provides Cu(2+) ions for the ascorbate-mediated deaminase degradation of the heparan sulfate chains of GPC1. Has glutathione peroxidase-like activity, can remove both hydrogen peroxide and lipid hydroperoxide in the presence of thiols. Also shows NO-oxidase and NO2 synthase activities that determine endocrine NO homeostasis. This chain is Ceruloplasmin, found in Homo sapiens (Human).